A 1142-amino-acid polypeptide reads, in one-letter code: Error-prone DNA polymerase (1142 aa).

Positions 291 to 361 (TSSPAQAARE…GTGAAAGTDR (71 aa)) are disordered. 2 stretches are compositionally biased toward low complexity: residues 311-320 (LRASLPAERP) and 327-344 (GPAA…PGEP). A compositionally biased stretch (gly residues) spans 345–355 (GLAGAGGGTGA).

Belongs to the DNA polymerase type-C family. DnaE2 subfamily.

The protein localises to the cytoplasm. It carries out the reaction DNA(n) + a 2'-deoxyribonucleoside 5'-triphosphate = DNA(n+1) + diphosphate. In terms of biological role, DNA polymerase involved in damage-induced mutagenesis and translesion synthesis (TLS). It is not the major replicative DNA polymerase. The sequence is that of Error-prone DNA polymerase from Anaeromyxobacter dehalogenans (strain 2CP-1 / ATCC BAA-258).